The sequence spans 473 residues: Trehalose-6-phosphate synthase (473 aa).

Arginine 10 is a D-glucose 6-phosphate binding site. A UDP-alpha-D-glucose-binding site is contributed by 21–22 (GG). D-glucose 6-phosphate-binding residues include tyrosine 76 and aspartate 130. UDP-alpha-D-glucose contacts are provided by arginine 262 and lysine 267. Arginine 300 contributes to the D-glucose 6-phosphate binding site. Residues phenylalanine 339 and 365 to 369 (LVAKE) each bind UDP-alpha-D-glucose.

Belongs to the glycosyltransferase 20 family. In terms of assembly, homotetramer.

It carries out the reaction D-glucose 6-phosphate + UDP-alpha-D-glucose = alpha,alpha-trehalose 6-phosphate + UDP + H(+). It participates in glycan biosynthesis; trehalose biosynthesis. Its function is as follows. Probably involved in the osmoprotection via the biosynthesis of trehalose. Catalyzes the transfer of glucose from UDP-alpha-D-glucose (UDP-Glc) to D-glucose 6-phosphate (Glc-6-P) to form trehalose-6-phosphate. Acts with retention of the anomeric configuration of the UDP-sugar donor. This Citrobacter koseri (strain ATCC BAA-895 / CDC 4225-83 / SGSC4696) protein is Trehalose-6-phosphate synthase.